The sequence spans 331 residues: Beta-ketoacyl-[acyl-carrier-protein] synthase III (331 aa).

Active-site residues include Cys113 and His256. An ACP-binding region spans residues 257 to 261 (QANKR). The active site involves Asn286.

Belongs to the thiolase-like superfamily. FabH family. In terms of assembly, homodimer.

The protein localises to the cytoplasm. The catalysed reaction is malonyl-[ACP] + acetyl-CoA + H(+) = 3-oxobutanoyl-[ACP] + CO2 + CoA. The protein operates within lipid metabolism; fatty acid biosynthesis. Catalyzes the condensation reaction of fatty acid synthesis by the addition to an acyl acceptor of two carbons from malonyl-ACP. Catalyzes the first condensation reaction which initiates fatty acid synthesis and may therefore play a role in governing the total rate of fatty acid production. Possesses both acetoacetyl-ACP synthase and acetyl transacylase activities. Its substrate specificity determines the biosynthesis of branched-chain and/or straight-chain of fatty acids. The sequence is that of Beta-ketoacyl-[acyl-carrier-protein] synthase III from Solibacter usitatus (strain Ellin6076).